The sequence spans 511 residues: Synaptotagmin-6 (511 aa).

Topologically, residues 1–59 (MSGVWGAGGPRCQAALAVLASLCRARPPPLGLDVETCRSFELQSPEQSPSAADSGTSVS) are vesicular. The interval 12–38 (CQAALAVLASLCRARPPPLGLDVETCR) is cysteine motif. A helical membrane pass occupies residues 60–80 (LLAVVVIVCGVALVAVFLFLF). Topologically, residues 81-511 (WKLCWMPWRK…KSFKEGTPRL (431 aa)) are cytoplasmic. Disordered stretches follow at residues 92 to 119 (EASS…ADKL) and 157 to 182 (TKLQ…LPRQ). Low complexity predominate over residues 94–103 (SSPSSANPAS). Polar residues-rich tracts occupy residues 104–113 (ETLQSPSSRG) and 160–172 (QRQT…STRH). Residue S217 is modified to Phosphoserine. C2 domains lie at 230 to 351 (SCGK…SIWK) and 362 to 495 (DLGE…AHWH). D261, D267, D319, F320, D321, S324, D327, D393, D399, D453, and D455 together coordinate Ca(2+). Residues 483-511 (MLAYPRKPIAHWHSLVEVKKSFKEGTPRL) form a necessary for cell membrane association (isoform 2) region.

This sequence belongs to the synaptotagmin family. As to quaternary structure, isoform 1: Homodimer; disulfide-linked via the cysteine motif. Isoform 1: Can also form heterodimers with SYT3, SYT7, SYT9 and SYT10. Isoform 1: Interacts with STX1A, STX1B and STX2; the interaction is Ca(2+)-dependent. Isoform 2: Is not able to form homodimer and heterodimers. It depends on Ca(2+) as a cofactor. Isoform 1 is expressed in the olfactory bulb. Isoform 2 is expressed in the brain (at protein level).

The protein resides in the cytoplasmic vesicle. It localises to the secretory vesicle. Its subcellular location is the synaptic vesicle membrane. It is found in the membrane. The protein localises to the cytoplasm. The protein resides in the cytosol. It localises to the cell membrane. May be involved in Ca(2+)-dependent exocytosis of secretory vesicles through Ca(2+) and phospholipid binding to the C2 domain or may serve as Ca(2+) sensors in the process of vesicular trafficking and exocytosis. May mediate Ca(2+)-regulation of exocytosis in acrosomal reaction in sperm. This Mus musculus (Mouse) protein is Synaptotagmin-6 (Syt6).